The following is a 1144-amino-acid chain: Ribonucleoside-diphosphate reductase large subunit (1144 aa).

The segment at 1 to 33 (MANRPAASALAGARSPSERQEPREPEVAPPGGD) is disordered. Residues 16 to 26 (PSERQEPREPE) show a composition bias toward basic and acidic residues. The RIP homotypic interaction motif (RHIM) motif lies at 55 to 75 (AYRISDSSFVQCGSNCSMIID). The segment at 118–324 (SGPSATTSVG…TDPGYPVPLE (207 aa)) is disordered. Positions 119–132 (GPSATTSVGTQTSG) are enriched in polar residues. A compositionally biased stretch (pro residues) spans 141 to 159 (TPEPQGPQAVPPPPPPPFP). Positions 164–179 (CCARRDARGGAEKDVG) are enriched in basic and acidic residues. The segment covering 192 to 204 (SETEDSDSSDEDT) has biased composition (acidic residues). Low complexity-rich tracts occupy residues 205 to 216 (GSGSETLSRSSS) and 279 to 305 (GSAT…DVAP). Substrate-binding positions include threonine 573, 588 to 589 (SC), glycine 619, 798 to 802 (NLCTE), and 975 to 979 (PTAAS). Cysteine 589 and cysteine 815 form a disulfide bridge. Residue asparagine 798 is the Proton acceptor of the active site. Cysteine 800 acts as the Cysteine radical intermediate in catalysis. The Proton acceptor role is filled by glutamate 802.

It belongs to the ribonucleoside diphosphate reductase large chain family. As to quaternary structure, heterotetramer composed of a homodimer of the large subunit (R1) and a homodimer of the small subunit (R2). Larger multisubunit protein complex are also active, composed of (R1)n(R2)n. May self-assemble (via RIP homotypic interaction motif/RHIM) into homomeric fibrillar amyloid structures. Interacts (via RHIM) with human RIPK1 (via RHIM). Interacts (via RHIM) with human RIPK3 (via RHIM). May interact (via RHIM) with human ZBP1 (via RHIM). Interacts (via C-terminus) with host CASP8.

The enzyme catalyses a 2'-deoxyribonucleoside 5'-diphosphate + [thioredoxin]-disulfide + H2O = a ribonucleoside 5'-diphosphate + [thioredoxin]-dithiol. Ribonucleoside-diphosphate reductase holoenzyme that provides the precursors necessary for viral DNA synthesis. Allows virus growth in non-dividing cells, as well as reactivation from latency in infected hosts. Catalyzes the biosynthesis of deoxyribonucleotides from the corresponding ribonucleotides. The N-terminal region confers antiapoptotic activity in differentiated cells such as neurons and is important for viral reactivation to increase neural survivability. Prevents host necroptosis by targeting host RIPK1 and RIPK3, thereby hampering the formation of necroptotic RIPK1-RIPK3 complexes. May form hetero-amyloid structures with host proteins RIPK3 or ZBP1, thereby preventing RIPK3- and ZBP1-mediated necroptosis. In addition, inhibits extrinsic apoptosis by targeting host CASP8. The polypeptide is Ribonucleoside-diphosphate reductase large subunit (Homo sapiens (Human)).